The chain runs to 713 residues: F-box/WD repeat-containing protein 7 (713 aa).

Positions 1 to 150 (MNQELLSVGS…DEHTHNSNVT (150 aa)) are disordered. Position 26 is a phosphoserine (S26). The span at 46–55 (RHQEEEHTAR) shows a compositional bias: basic and acidic residues. The segment covering 69–84 (QNDSQQGQVEENNNRF) has biased composition (polar residues). Acidic residues predominate over residues 87-135 (VDEDSSGNQEEQEEDEEHAGEQEEEEEEEEEEEEEEEMDQESDDFDQSD). The stretch at 94-136 (NQEEQEEDEEHAGEQEEEEEEEEEEEEEEEMDQESDDFDQSDD) forms a coiled coil. Basic and acidic residues predominate over residues 136-145 (DSSREDEHTH). A Phosphothreonine modification is found at T211. The residue at position 233 (S233) is a Phosphoserine. An F-box domain is found at 284 to 330 (RDFISLLPKELALYVLSFLEPKDLLQAAQTCRYWRILAEDNLLWREK). WD repeat units follow at residues 384–424 (GHDD…RTLV), 426–462 (HTGG…CIHT), 465–504 (GHTS…HVLM), 506–542 (HVAA…CLHT), 545–584 (GHTN…HTLT), 586–624 (HQSL…QTLQ), and 628–665 (KHQS…FIRN).

As to quaternary structure, homodimer; homodimerization plays a role in substrate binding and/or ubiquitination and degradation. Component of the SCF(FBXW7) complex consisting of CUL1, RBX1, SKP1 and FBXW7. Interacts (via F-box domain) with SKP1. Interacts (via F-box domain) with pseudophosphatase STYX; the interaction is direct and prevents FBXW7 interaction with SKP1. Interacts with cyclin-E (CCNE1 or CCNE2). Interacts with PSEN1. Forms a trimeric complex with NOTCH1 and SGK1. Interacts with NOTCH1 intracellular domain/NICD and NOTCH4 intracellular domain/NICD. Interacts with NOTCH2 intracellular domain (N2ICD). Interacts with MYC (when phosphorylated). Interacts with USP28, counteracting ubiquitination of MYC. Interacts (when phosphorylated at Thr-211) with PIN1, disrupting FBXW7 dimerization and promoting FBXW7 autoubiquitination and degradation. Interacts with UBE2QL1. Interacts with FAM83D; promotes FBXW7 degradation. Interacts with MYCN; FBXW7 competes with AURKA for binding to unphosphorylated MYCN but not for binding to phosphorylated MYCN. Interacts with JUN. Found in a complex with JUN and PRR7. Interacts with JUN and PRR7; the interaction inhibits ubiquitination-mediated JUN degradation, promoting its phosphorylation and transcriptional activity. Interacts with NFE2L1. Interacts with NR1D1. Interacts with RICTOR; mediates RICTOR ubiquitination and degradation. In terms of processing, phosphorylation at Thr-211 promotes interaction with PIN1, leading to disrupt FBXW7 dimerization and promoting FBXW7 autoubiquitination and degradation. Phosphorylated by ATM at Ser-26 in response to DNA damage, promoting recruitment to DNA damage sites and 'Lys-63'-linked ubiquitination of phosphorylated XRCC4. Post-translationally, ubiquitinated: autoubiquitinates following phosphorylation at Thr-211 and subsequent interaction with PIN1. Ubiquitination leads to its degradation.

It localises to the nucleus. The protein localises to the nucleoplasm. The protein resides in the chromosome. It functions in the pathway protein modification; protein ubiquitination. Functionally, substrate recognition component of a SCF (SKP1-CUL1-F-box protein) E3 ubiquitin-protein ligase complex which mediates the ubiquitination and subsequent proteasomal degradation of target proteins. Recognizes and binds phosphorylated sites/phosphodegrons within target proteins and thereafter brings them to the SCF complex for ubiquitination. Identified substrates include cyclin-E (CCNE1 or CCNE2), JUN, MYC, NOTCH1 released notch intracellular domain (NICD), NOTCH2, MCL1, MLST8, RICTOR and probably PSEN1. Acts as a negative regulator of JNK signaling by binding to phosphorylated JUN and promoting its ubiquitination and subsequent degradation. SCF(FBXW7) complex mediates the ubiquitination and subsequent degradation of NFE2L1. Involved in bone homeostasis and negative regulation of osteoclast differentiation. Regulates the amplitude of the cyclic expression of hepatic core clock genes and genes involved in lipid and glucose metabolism via ubiquitination and proteasomal degradation of their transcriptional repressor NR1D1; CDK1-dependent phosphorylation of NR1D1 is necessary for SCF(FBXW7)-mediated ubiquitination. Also able to promote 'Lys-63'-linked ubiquitination in response to DNA damage. The SCF(FBXW7) complex facilitates double-strand break repair following phosphorylation by ATM: phosphorylation promotes localization to sites of double-strand breaks and 'Lys-63'-linked ubiquitination of phosphorylated XRCC4, enhancing DNA non-homologous end joining. In Rattus norvegicus (Rat), this protein is F-box/WD repeat-containing protein 7.